Reading from the N-terminus, the 315-residue chain is 4-hydroxy-3-methylbut-2-enyl diphosphate reductase (315 aa).

Position 12 (cysteine 12) interacts with [4Fe-4S] cluster. The (2E)-4-hydroxy-3-methylbut-2-enyl diphosphate site is built by histidine 41 and histidine 74. Residues histidine 41 and histidine 74 each coordinate dimethylallyl diphosphate. Isopentenyl diphosphate contacts are provided by histidine 41 and histidine 74. [4Fe-4S] cluster is bound at residue cysteine 96. Histidine 124 is a binding site for (2E)-4-hydroxy-3-methylbut-2-enyl diphosphate. Residue histidine 124 coordinates dimethylallyl diphosphate. Histidine 124 is an isopentenyl diphosphate binding site. Glutamate 126 (proton donor) is an active-site residue. Threonine 168 is a binding site for (2E)-4-hydroxy-3-methylbut-2-enyl diphosphate. Cysteine 198 is a [4Fe-4S] cluster binding site. 4 residues coordinate (2E)-4-hydroxy-3-methylbut-2-enyl diphosphate: serine 226, serine 227, asparagine 228, and serine 270. Dimethylallyl diphosphate-binding residues include serine 226, serine 227, asparagine 228, and serine 270. Residues serine 226, serine 227, asparagine 228, and serine 270 each coordinate isopentenyl diphosphate.

This sequence belongs to the IspH family. It depends on [4Fe-4S] cluster as a cofactor.

The enzyme catalyses isopentenyl diphosphate + 2 oxidized [2Fe-2S]-[ferredoxin] + H2O = (2E)-4-hydroxy-3-methylbut-2-enyl diphosphate + 2 reduced [2Fe-2S]-[ferredoxin] + 2 H(+). The catalysed reaction is dimethylallyl diphosphate + 2 oxidized [2Fe-2S]-[ferredoxin] + H2O = (2E)-4-hydroxy-3-methylbut-2-enyl diphosphate + 2 reduced [2Fe-2S]-[ferredoxin] + 2 H(+). It functions in the pathway isoprenoid biosynthesis; dimethylallyl diphosphate biosynthesis; dimethylallyl diphosphate from (2E)-4-hydroxy-3-methylbutenyl diphosphate: step 1/1. It participates in isoprenoid biosynthesis; isopentenyl diphosphate biosynthesis via DXP pathway; isopentenyl diphosphate from 1-deoxy-D-xylulose 5-phosphate: step 6/6. In terms of biological role, catalyzes the conversion of 1-hydroxy-2-methyl-2-(E)-butenyl 4-diphosphate (HMBPP) into a mixture of isopentenyl diphosphate (IPP) and dimethylallyl diphosphate (DMAPP). Acts in the terminal step of the DOXP/MEP pathway for isoprenoid precursor biosynthesis. This chain is 4-hydroxy-3-methylbut-2-enyl diphosphate reductase, found in Pseudomonas savastanoi pv. phaseolicola (strain 1448A / Race 6) (Pseudomonas syringae pv. phaseolicola (strain 1448A / Race 6)).